Consider the following 340-residue polypeptide: tRNA dimethylallyltransferase (340 aa).

The segment at 1-25 (MDQNRSPNGRDCREPPSPSSTARPG) is disordered. 31 to 38 (GPTATGKS) contributes to the ATP binding site. Substrate is bound at residue 33-38 (TATGKS). The interval 56–59 (DSRQ) is interaction with substrate tRNA.

The protein belongs to the IPP transferase family. In terms of assembly, monomer. The cofactor is Mg(2+).

It catalyses the reaction adenosine(37) in tRNA + dimethylallyl diphosphate = N(6)-dimethylallyladenosine(37) in tRNA + diphosphate. Catalyzes the transfer of a dimethylallyl group onto the adenine at position 37 in tRNAs that read codons beginning with uridine, leading to the formation of N6-(dimethylallyl)adenosine (i(6)A). The protein is tRNA dimethylallyltransferase of Synechococcus sp. (strain JA-3-3Ab) (Cyanobacteria bacterium Yellowstone A-Prime).